A 785-amino-acid polypeptide reads, in one-letter code: Endonuclease MutS2 (785 aa).

334–341 (GPNTGGKT) is a binding site for ATP. The region spanning 710-785 (LDLRGYNVED…GVGATIAELK (76 aa)) is the Smr domain.

It belongs to the DNA mismatch repair MutS family. MutS2 subfamily. In terms of assembly, homodimer. Binds to stalled ribosomes, contacting rRNA.

Endonuclease that is involved in the suppression of homologous recombination and thus may have a key role in the control of bacterial genetic diversity. In terms of biological role, acts as a ribosome collision sensor, splitting the ribosome into its 2 subunits. Detects stalled/collided 70S ribosomes which it binds and splits by an ATP-hydrolysis driven conformational change. Acts upstream of the ribosome quality control system (RQC), a ribosome-associated complex that mediates the extraction of incompletely synthesized nascent chains from stalled ribosomes and their subsequent degradation. Probably generates substrates for RQC. The protein is Endonuclease MutS2 of Brevibacillus brevis (strain 47 / JCM 6285 / NBRC 100599).